The primary structure comprises 738 residues: MCGCVGVISNVDENFQVKTIVTMSDIDYEALEKEVPLDDIDFSDLEEQYAVKPDFGIDNFVVVDGAPIAPEAKVPVLIKVLKKLFSTVGEIVEGEEGIHMPLEDGKSKGFLFIQFKTAQMADAAIQQMHGKKLDQKHRLLVNKLSDIEKYGIEGNVPTEFKEPEIPPFKSHGYLKSWLQDEQGRDQIGLHYSDTFGVYWNKRKSPEPVIEPRKGFTSKYAKFSPKGTYLFSIHPQGIQSWGGAQFESISKFIHSQVRLIDFSPNEKYLVTLSPQPIQVPENPAERASYPFGPESNGHKLVIWDLATSEPARTFALPPHLEGQKEMPWPLVKWSHDDKYCARQGPGALAIYETPSFQLLDKKLVKIDDIVDFEWAPAPVYLDTSSQNGPGEHVLSYWTPESSNQTARVALMQIPSRQVLRTINLFQVSDCKMHWQDEAKYLCVKVDRHTKSGKTIFSNLEFFKVTERDIPVEKLELKEVVINFAWEPRSDRFVTISRLDDGALNPAIPKNTIAFYAPETSKTKGGAITSSKYKAFETVVDKHSNTVYWSPKGRFVVIATLARSNGELEFYDCTYEEENVRTTSKNNVKLLKSEKFSGMTNLAWDPSGRFVAAWSSSWIHTIENGYKMFEFTGNMLRDESIDNFNEFLWRPRPPSMLNAADRKKVRKNLRTYSAQFEEADAMEADAATRQLILTRRKQLEEWRAYRAKHASAGHQKKEDKMTVIEEIKEEIIEEKEEIVE.

The sufficient for interaction with HCR1 and TIF32 stretch occupies residues 1–120 (MCGCVGVISN…LFIQFKTAQM (120 aa)). Positions 1–245 (MCGCVGVISN…GIQSWGGAQF (245 aa)) are sufficient for interaction with PIC8. One can recognise an RRM domain in the interval 59–146 (NFVVVDGAPI…HRLLVNKLSD (88 aa)). 4 WD repeats span residues 211–250 (PRKG…SISK), 322–360 (QKEM…LLDK), 363–406 (VKID…QTAR), and 537–579 (VVDK…ENVR).

Belongs to the eIF-3 subunit B family. In terms of assembly, component of the eukaryotic translation initiation factor 3 (eIF-3) complex.

It localises to the cytoplasm. Functionally, RNA-binding component of the eukaryotic translation initiation factor 3 (eIF-3) complex, which is involved in protein synthesis of a specialized repertoire of mRNAs and, together with other initiation factors, stimulates binding of mRNA and methionyl-tRNAi to the 40S ribosome. The eIF-3 complex specifically targets and initiates translation of a subset of mRNAs involved in cell proliferation. The chain is Eukaryotic translation initiation factor 3 subunit B from Meyerozyma guilliermondii (strain ATCC 6260 / CBS 566 / DSM 6381 / JCM 1539 / NBRC 10279 / NRRL Y-324) (Yeast).